The primary structure comprises 505 residues: Retinoic acid receptor gamma (505 aa).

Disordered stretches follow at residues 1 to 57 (MMKF…SSKD) and 113 to 134 (SLSV…PSPP). 2 stretches are compositionally biased toward basic and acidic residues: residues 12–22 (DGGERPEEEGK) and 32–46 (MGKE…KEEA). Residues 52–142 (MSSSKDRICS…PPPPPRVYKP (91 aa)) are modulating. The segment covering 115-124 (SVETQSTSSE) has biased composition (polar residues). NR C4-type zinc fingers lie at residues 143 to 163 (CFVC…CEGC) and 179 to 203 (CHRD…LQKC). The nuclear receptor DNA-binding region spans 143-208 (CFVCNDKSSG…RLQKCFEVGM (66 aa)). The hinge stretch occupies residues 209-237 (SKEAVRNDRNKKKKEIKEEVVTDSYEMPP). Residues 238–472 (EMEALIQKVS…PLIREMLENP (235 aa)) enclose the NR LBD domain. The disordered stretch occupies residues 462–505 (PPLIREMLENPEAFEDDASPPPKSEQKPIKVEEKPGEKTSTKDP). Residues 485 to 505 (SEQKPIKVEEKPGEKTSTKDP) are compositionally biased toward basic and acidic residues.

The protein belongs to the nuclear hormone receptor family. NR1 subfamily. In terms of assembly, heterodimer; with a RXR molecule. Binds DNA preferentially as a RAR/RXR heterodimer. Isoform Delta-1A and Isoform Delta-1B are most abundant in regenerating limbs, tails, and the anterior half of the lower jaw. Isoform Delta-2 is broadly and uniformly distributed.

Its subcellular location is the nucleus. Functionally, receptor for retinoic acid. Retinoic acid receptors bind as heterodimers to their target response elements in response to their ligands, all-trans or 9-cis retinoic acid, and regulate gene expression in various biological processes. The RAR/RXR heterodimers bind to the retinoic acid response elements (RARE) composed of tandem 5'-AGGTCA-3' sites known as DR1-DR5. This Notophthalmus viridescens (Eastern newt) protein is Retinoic acid receptor gamma (RARG).